The sequence spans 350 residues: S-adenosylmethionine:tRNA ribosyltransferase-isomerase (350 aa).

This sequence belongs to the QueA family. As to quaternary structure, monomer.

It localises to the cytoplasm. It carries out the reaction 7-aminomethyl-7-carbaguanosine(34) in tRNA + S-adenosyl-L-methionine = epoxyqueuosine(34) in tRNA + adenine + L-methionine + 2 H(+). It functions in the pathway tRNA modification; tRNA-queuosine biosynthesis. In terms of biological role, transfers and isomerizes the ribose moiety from AdoMet to the 7-aminomethyl group of 7-deazaguanine (preQ1-tRNA) to give epoxyqueuosine (oQ-tRNA). This Parvibaculum lavamentivorans (strain DS-1 / DSM 13023 / NCIMB 13966) protein is S-adenosylmethionine:tRNA ribosyltransferase-isomerase.